We begin with the raw amino-acid sequence, 449 residues long: UNC93-like protein MFSD11 (449 aa).

Residues 8-28 (LFNIIILGVAFMFMFTAFQTC) form a helical membrane-spanning segment. Asparagine 40 carries N-linked (GlcNAc...) asparagine glycosylation. Transmembrane regions (helical) follow at residues 53–73 (AIIYGVFSASNLITPSVVAIV), 74–94 (GPQLSMFASGLFYSMYIAVFI), 96–116 (PFPWSFYTASVFIGIAAAVLW), 138–158 (IFWALLQSSLFFGNLYIYFAW), and 170–190 (RTVFIALTVISLVGTVLFFLI). Serine 204 carries the phosphoserine modification. 6 helical membrane-spanning segments follow: residues 239-259 (MLLLSITTAYTGLELTFFSGV), 277-297 (LIGLSGIFIGIGEILGGSLFG), 309-329 (PVVLLGILVHFIAFYLIFLNM), 359-379 (FLLGLGDSCFNTQLLSILGFL), 385-405 (APAFAIFKFVQSICAAVAFFY), and 410-430 (LLHWQLLVMVIFGFFGTISFF).

This sequence belongs to the unc-93 family.

It localises to the membrane. The chain is UNC93-like protein MFSD11 (MFSD11) from Macaca fascicularis (Crab-eating macaque).